Consider the following 166-residue polypeptide: Interferon gamma (166 aa).

Residues 1–23 form the signal peptide; that stretch reads MKYTSYILAFQLCVVLGSLGCYC. Gln-24 bears the Pyrrolidone carboxylic acid mark. 3 N-linked (GlcNAc...) asparagine glycosylation sites follow: Asn-48, Asn-86, and Asn-120.

It belongs to the type II (or gamma) interferon family. As to quaternary structure, homodimer. Interacts with IFNGR1 (via extracellular domain); this interaction promotes IFNGR1 dimerization. Released primarily from activated T lymphocytes.

The protein resides in the secreted. Type II interferon produced by immune cells such as T-cells and NK cells that plays crucial roles in antimicrobial, antiviral, and antitumor responses by activating effector immune cells and enhancing antigen presentation. Primarily signals through the JAK-STAT pathway after interaction with its receptor IFNGR1 to affect gene regulation. Upon IFNG binding, IFNGR1 intracellular domain opens out to allow association of downstream signaling components JAK2, JAK1 and STAT1, leading to STAT1 activation, nuclear translocation and transcription of IFNG-regulated genes. Many of the induced genes are transcription factors such as IRF1 that are able to further drive regulation of a next wave of transcription. Plays a role in class I antigen presentation pathway by inducing a replacement of catalytic proteasome subunits with immunoproteasome subunits. In turn, increases the quantity, quality, and repertoire of peptides for class I MHC loading. Increases the efficiency of peptide generation also by inducing the expression of activator PA28 that associates with the proteasome and alters its proteolytic cleavage preference. Up-regulates as well MHC II complexes on the cell surface by promoting expression of several key molecules such as cathepsins B/CTSB, H/CTSH, and L/CTSL. Participates in the regulation of hematopoietic stem cells during development and under homeostatic conditions by affecting their development, quiescence, and differentiation. The chain is Interferon gamma (IFNG) from Callithrix jacchus (White-tufted-ear marmoset).